The chain runs to 294 residues: Fructose-bisphosphate aldolase class 1 (294 aa).

The active-site Proton acceptor is E176. K213 serves as the catalytic Schiff-base intermediate with dihydroxyacetone-P.

It belongs to the class I fructose-bisphosphate aldolase family.

The catalysed reaction is beta-D-fructose 1,6-bisphosphate = D-glyceraldehyde 3-phosphate + dihydroxyacetone phosphate. It participates in carbohydrate degradation; glycolysis; D-glyceraldehyde 3-phosphate and glycerone phosphate from D-glucose: step 4/4. This chain is Fructose-bisphosphate aldolase class 1, found in Oceanobacillus iheyensis (strain DSM 14371 / CIP 107618 / JCM 11309 / KCTC 3954 / HTE831).